The chain runs to 422 residues: MDSILVKGNGELRGQIPIAGAKNACLALMPATLLSDEPLTLTNAPRLSDIRTMTQLLQSLGAEVASLQGGQVLALSSHALTDHRADYDIVRKMRASILVLGPMLARDGHAVVSLPGGCAIGARPVDLHLKALEAMGAELDLRDGYIHAKAPAGGLKGARVVFPLVSVGATENALMAATLAKGTTVLENAAREPEIVDLARCLRRMGAQIEGEGSSIMTIQGVDRLGGATHPVVTDRIELGTYMLAPAICGGEVELLGGRIELVGAFCEKLDAAGISVEETERGLRVARRNGRVKAVDVMTEPFPGFPTDLQAQMMALLCTAEGTSVLEERIFENRFMHAPELIRMGARIEVHGGTATVTGVEKLRGAPVMATDLRASVSLILAGLAAEGETIVSRVYHLDRGYERVEEKLSACGAQIRRIPG.

22–23 serves as a coordination point for phosphoenolpyruvate; sequence KN. UDP-N-acetyl-alpha-D-glucosamine is bound at residue arginine 94. Cysteine 118 serves as the catalytic Proton donor. 2-(S-cysteinyl)pyruvic acid O-phosphothioketal is present on cysteine 118. Residues 123-127, aspartate 309, and isoleucine 331 contribute to the UDP-N-acetyl-alpha-D-glucosamine site; that span reads RPVDL.

Belongs to the EPSP synthase family. MurA subfamily.

The protein localises to the cytoplasm. It carries out the reaction phosphoenolpyruvate + UDP-N-acetyl-alpha-D-glucosamine = UDP-N-acetyl-3-O-(1-carboxyvinyl)-alpha-D-glucosamine + phosphate. It participates in cell wall biogenesis; peptidoglycan biosynthesis. Functionally, cell wall formation. Adds enolpyruvyl to UDP-N-acetylglucosamine. The chain is UDP-N-acetylglucosamine 1-carboxyvinyltransferase from Cereibacter sphaeroides (strain ATCC 17023 / DSM 158 / JCM 6121 / CCUG 31486 / LMG 2827 / NBRC 12203 / NCIMB 8253 / ATH 2.4.1.) (Rhodobacter sphaeroides).